The chain runs to 98 residues: Small ribosomal subunit protein eS24 (98 aa).

Residues Gly-76–Ala-98 are disordered. The segment covering Gly-89 to Ala-98 has biased composition (basic and acidic residues).

The protein belongs to the eukaryotic ribosomal protein eS24 family.

This Methanosphaerula palustris (strain ATCC BAA-1556 / DSM 19958 / E1-9c) protein is Small ribosomal subunit protein eS24.